A 28-amino-acid chain; its full sequence is Alpha-(1-6)-linked fucose-specific lectin (28 aa).

In terms of assembly, homohexamer. Expressed by mycelium-forming spores.

It is found in the secreted. Alpha-(1-6)-linked L-fucose specific lectin. The polypeptide is Alpha-(1-6)-linked fucose-specific lectin (Rhizopus stolonifer (Rhizopus nigricans)).